A 456-amino-acid polypeptide reads, in one-letter code: Transcription factor tau subunit sfc1 (456 aa).

Disordered stretches follow at residues 394–416 and 437–456; these read DRYSNFDEQDNTDLNDTVRGLNT and HEGFEDLEEIDDDYDDIFGD. Over residues 407–416 the composition is skewed to polar residues; it reads LNDTVRGLNT. Residues 441-456 are compositionally biased toward acidic residues; it reads EDLEEIDDDYDDIFGD.

In terms of assembly, component of the TFIIIC complex including sfc1, sfc3, sfc4, sfc6 and sfc7. The subunits are organized in two globular domains, tauA and tauB, connected by a proteolysis-sensitive and flexible linker. Interacts with sfc3, sfc4 and sfc6. Phosphorylated.

The protein resides in the nucleus. In terms of biological role, TFIIIC mediates tRNA and 5S RNA gene activation by binding to intragenic promoter elements. Upstream of the transcription start site, TFIIIC assembles the initiation complex TFIIIB-TFIIIC-tDNA, which is sufficient for RNA polymerase III recruitment and function. Part of the tauA domain of TFIIIC that binds boxA DNA promoter sites of tRNA and similar genes. Participates in the interconnection of tauA with tauB via its contacts with sfc3 and sfc6. Serves as a scaffold critical for tauA-DNA spatial configuration and tauB-DNA stability. Localizes to chromatin insulator sequence without recruiting RNA polymerase III and plays a role in nuclear organization. The protein is Transcription factor tau subunit sfc1 (sfc1) of Schizosaccharomyces pombe (strain 972 / ATCC 24843) (Fission yeast).